A 350-amino-acid chain; its full sequence is m7GpppX diphosphatase (350 aa).

N-acetylserine is present on Ser2. Ser60 is subject to Phosphoserine. Thr66 is modified (phosphothreonine). A Phosphothreonine; by YAK1 modification is found at Thr66. Tyr70 is modified (phosphotyrosine). Thr120 is subject to Phosphothreonine. Substrate contacts are provided by residues Glu171, Lys196, and 259–270 (HYQPSYYHFHIH). A Histidine triad motif motif is present at residues 266 to 270 (HFHIH). His268 (nucleophile) is an active-site residue.

Belongs to the HIT family. As to quaternary structure, homodimer. Forms heterodimer with DCS2; the interaction inhibits the DCS1 scavenger decapping activity during post-diauxic growth. Phosphorylated. Phosphorylation occurs upon glucose deprivation.

It localises to the cytoplasm. The protein resides in the perinuclear region. The protein localises to the P-body. The enzyme catalyses a 5'-end (N(7)-methyl 5'-triphosphoguanosine)-ribonucleoside in mRNA + H2O = N(7)-methyl-GMP + a 5'-end diphospho-ribonucleoside in mRNA + 2 H(+). With respect to regulation, the hydrolytic product 7-methylguanosine diphosphate (m7GDP) efficiently inhibits the decapping scavenger activity and acts as a competitive inhibitor in vitro. Its function is as follows. Decapping scavenger enzyme that catalyzes the cleavage of a residual cap structure following the degradation of mRNAs by the 3'-&gt;5' exosome-mediated mRNA decay pathway. Hydrolyzes cap analog structures like 7-methylguanosine nucleoside triphosphate (m7GpppG) and tri-methyl guanosine nucleoside triphosphate (m3(2,2,7)GpppG) with up to 10 nucleotide substrates (small capped oligoribonucleotides) and specifically releases 5'-phosphorylated RNA fragments and 7-methylguanosine monophosphate (m7GMP) or tri-methyl guanosine nucleoside monophosphate (m3(2,2,7)GMP), respectively. Does not hydrolyze unmethylated cap analog (GpppG) and shows no decapping activity on intact m7GpppG-capped mRNA molecules longer than 25 nucleotides. Does not hydrolyze 7-methylguanosine diphosphate (m7GDP) and tri-methylguanosine diphosphate (m3(2,2,7)GDP) to (m(7)GMP) and m3(2,2,7)GMP, respectively. May also play a role in the 5'-&gt;3 mRNA decay pathway; m7GDP, the downstream product released by the 5'-&gt;3' mRNA mediated decapping activity, may be also converted by DCS1 to m7GMP. Binds to m7GpppG and strongly to m7GDP. May also regulate the 5'-&gt;3' exoribonucleolytic mRNA decay pathway in a cap-independent manner. Negatively regulates trehalase activity. This is m7GpppX diphosphatase from Saccharomyces cerevisiae (strain ATCC 204508 / S288c) (Baker's yeast).